Here is a 478-residue protein sequence, read N- to C-terminus: Glutamate-1-semialdehyde 2,1-aminomutase, chloroplastic (478 aa).

Lys-318 carries the N6-(pyridoxal phosphate)lysine modification.

This sequence belongs to the class-III pyridoxal-phosphate-dependent aminotransferase family. HemL subfamily. Homodimer. It depends on pyridoxal 5'-phosphate as a cofactor.

Its subcellular location is the plastid. It is found in the chloroplast. It catalyses the reaction (S)-4-amino-5-oxopentanoate = 5-aminolevulinate. Its pathway is porphyrin-containing compound metabolism; protoporphyrin-IX biosynthesis; 5-aminolevulinate from L-glutamyl-tRNA(Glu): step 2/2. It functions in the pathway porphyrin-containing compound metabolism; chlorophyll biosynthesis. This chain is Glutamate-1-semialdehyde 2,1-aminomutase, chloroplastic (GSA), found in Nicotiana tabacum (Common tobacco).